The sequence spans 333 residues: Protein translocase subunit SecF (333 aa).

6 helical membrane-spanning segments follow: residues A27–I47, V152–V172, L180–L200, T207–F227, T253–G275, and A285–F307.

It belongs to the SecD/SecF family. SecF subfamily. Forms a complex with SecD. Part of the essential Sec protein translocation apparatus which comprises SecA, SecYEG and auxiliary proteins SecDF-YajC and YidC.

Its subcellular location is the cell inner membrane. In terms of biological role, part of the Sec protein translocase complex. Interacts with the SecYEG preprotein conducting channel. SecDF uses the proton motive force (PMF) to complete protein translocation after the ATP-dependent function of SecA. In Rhodobacter capsulatus (strain ATCC BAA-309 / NBRC 16581 / SB1003), this protein is Protein translocase subunit SecF.